We begin with the raw amino-acid sequence, 376 residues long: cAMP-dependent protein kinase type I regulatory subunit (376 aa).

The tract at residues 1-131 (MSYMMAKTLE…ALSKAIAKNV (131 aa)) is dimerization and phosphorylation. Residues 72-93 (PDDCEDLSPMPQTAAPPVRRRG) are disordered. A Pseudophosphorylation motif motif is present at residues 91-95 (RRGGI). At Ser-96 the chain carries Phosphoserine. 3',5'-cyclic AMP-binding positions include 132-247 (LFAH…FLSR), Glu-197, Arg-206, 250-371 (ILES…YNSF), Glu-321, and Arg-330.

Belongs to the cAMP-dependent kinase regulatory chain family. In terms of assembly, tetramer, composed of 2 regulatory (R) and 2 catalytic (C) subunits. In the presence of cAMP it dissociates into 2 active monomeric C subunits and an R dimer. The pseudophosphorylation site binds to the substrate-binding region of the catalytic chain but is not phosphorylated. The physiological significance of phosphorylations by other kinases is unclear.

This Drosophila melanogaster (Fruit fly) protein is cAMP-dependent protein kinase type I regulatory subunit (Pka-R1).